Reading from the N-terminus, the 243-residue chain is Small ribosomal subunit protein uS3 (243 aa).

The 69-residue stretch at isoleucine 38 to lysine 106 folds into the KH type-2 domain. Positions proline 214–arginine 243 are disordered.

This sequence belongs to the universal ribosomal protein uS3 family. In terms of assembly, part of the 30S ribosomal subunit. Forms a tight complex with proteins S10 and S14.

Binds the lower part of the 30S subunit head. Binds mRNA in the 70S ribosome, positioning it for translation. The sequence is that of Small ribosomal subunit protein uS3 from Bacteroides thetaiotaomicron (strain ATCC 29148 / DSM 2079 / JCM 5827 / CCUG 10774 / NCTC 10582 / VPI-5482 / E50).